A 288-amino-acid chain; its full sequence is 2-methoxy-6-polyprenyl-1,4-benzoquinol methylase, mitochondrial (288 aa).

The S-adenosyl-L-methionine site is built by threonine 68, aspartate 102, and serine 146. The segment covering 260–270 has biased composition (low complexity); the sequence is PITPTTSSDIP. Residues 260–288 form a disordered region; sequence PITPTTSSDIPAQNTSEATCEVKPEPNSA. A compositionally biased stretch (basic and acidic residues) spans 279–288; the sequence is CEVKPEPNSA.

It belongs to the class I-like SAM-binding methyltransferase superfamily. MenG/UbiE family. Component of a multi-subunit COQ enzyme complex.

It is found in the mitochondrion inner membrane. It catalyses the reaction a 2-methoxy-6-(all-trans-polyprenyl)benzene-1,4-diol + S-adenosyl-L-methionine = a 5-methoxy-2-methyl-3-(all-trans-polyprenyl)benzene-1,4-diol + S-adenosyl-L-homocysteine + H(+). Its pathway is cofactor biosynthesis; ubiquinone biosynthesis. Methyltransferase required for the conversion of 2-polyprenyl-6-methoxy-1,4-benzoquinol (DDMQH2) to 2-polyprenyl-3-methyl-6-methoxy-1,4-benzoquinol (DMQH2). This chain is 2-methoxy-6-polyprenyl-1,4-benzoquinol methylase, mitochondrial, found in Leishmania donovani.